The following is a 688-amino-acid chain: PTS system glucoside-specific EIICBA component (688 aa).

Residues lysine 3–aspartate 427 form the PTS EIIC type-1 domain. Transmembrane regions (helical) follow at residues isoleucine 12 to phenylalanine 32, leucine 81 to methionine 101, leucine 137 to leucine 157, phenylalanine 182 to tryptophan 202, leucine 223 to isoleucine 243, alanine 284 to isoleucine 304, valine 315 to proline 335, phenylalanine 340 to leucine 360, leucine 364 to glycine 384, and leucine 395 to isoleucine 415. The region spanning alanine 438–lysine 519 is the PTS EIIB type-1 domain. Residue cysteine 460 is the Phosphocysteine intermediate; for EIIB activity of the active site. In terms of domain architecture, PTS EIIA type-1 spans aspartate 560 to asparagine 664. Residue histidine 612 is the Tele-phosphohistidine intermediate; for EIIA activity of the active site.

The protein localises to the cell membrane. In terms of biological role, the phosphoenolpyruvate-dependent sugar phosphotransferase system (sugar PTS), a major carbohydrate active -transport system, catalyzes the phosphorylation of incoming sugar substrates concomitantly with their translocation across the cell membrane. This system is involved in alpha- and beta-glucoside transport. The polypeptide is PTS system glucoside-specific EIICBA component (glcB) (Staphylococcus aureus (strain bovine RF122 / ET3-1)).